The chain runs to 283 residues: Elongation factor Ts (283 aa).

Residues 80–83 (TDFV) are involved in Mg(2+) ion dislocation from EF-Tu.

The protein belongs to the EF-Ts family.

The protein localises to the cytoplasm. Associates with the EF-Tu.GDP complex and induces the exchange of GDP to GTP. It remains bound to the aminoacyl-tRNA.EF-Tu.GTP complex up to the GTP hydrolysis stage on the ribosome. The protein is Elongation factor Ts of Pectobacterium carotovorum subsp. carotovorum (strain PC1).